The sequence spans 370 residues: Heme A synthase (370 aa).

Helical transmembrane passes span 15-35 (VRIW…VGGA), 104-124 (VIGI…AIGP), 129-149 (ALWI…WMVA), 161-181 (VRLA…VWTL), 200-220 (ALAL…VAGL), 261-280 (QFDH…LHMI), 293-313 (GAVL…FTVL), and 317-337 (PIDL…LAVL). A heme-binding site is contributed by His-264. Position 324 (His-324) interacts with heme.

It belongs to the COX15/CtaA family. Type 2 subfamily. In terms of assembly, interacts with CtaB. Heme b serves as cofactor.

The protein localises to the cell membrane. It carries out the reaction Fe(II)-heme o + 2 A + H2O = Fe(II)-heme a + 2 AH2. It participates in porphyrin-containing compound metabolism; heme A biosynthesis; heme A from heme O: step 1/1. Functionally, catalyzes the conversion of heme O to heme A by two successive hydroxylations of the methyl group at C8. The first hydroxylation forms heme I, the second hydroxylation results in an unstable dihydroxymethyl group, which spontaneously dehydrates, resulting in the formyl group of heme A. This chain is Heme A synthase, found in Rhodopseudomonas palustris (strain TIE-1).